We begin with the raw amino-acid sequence, 69 residues long: DNA-directed RNA polymerase subunit omega (69 aa).

This sequence belongs to the RNA polymerase subunit omega family. The RNAP catalytic core consists of 2 alpha, 1 beta, 1 beta' and 1 omega subunit. When a sigma factor is associated with the core the holoenzyme is formed, which can initiate transcription.

The enzyme catalyses RNA(n) + a ribonucleoside 5'-triphosphate = RNA(n+1) + diphosphate. Its function is as follows. Promotes RNA polymerase assembly. Latches the N- and C-terminal regions of the beta' subunit thereby facilitating its interaction with the beta and alpha subunits. The chain is DNA-directed RNA polymerase subunit omega from Symbiobacterium thermophilum (strain DSM 24528 / JCM 14929 / IAM 14863 / T).